We begin with the raw amino-acid sequence, 131 residues long: Large-conductance mechanosensitive channel (131 aa).

3 consecutive transmembrane segments (helical) span residues 14–34 (IMDLAIGVVIGGAFGKIVTSL), 38–58 (IIMPLVGLLLGGLDFSGLAVT), and 67–87 (GSFIQTIVNFFIISFSIFIVI).

The protein belongs to the MscL family. Homopentamer.

It is found in the cell membrane. Functionally, channel that opens in response to stretch forces in the membrane lipid bilayer. May participate in the regulation of osmotic pressure changes within the cell. In Bacillus velezensis (strain DSM 23117 / BGSC 10A6 / LMG 26770 / FZB42) (Bacillus amyloliquefaciens subsp. plantarum), this protein is Large-conductance mechanosensitive channel.